Consider the following 769-residue polypeptide: Polyribonucleotide nucleotidyltransferase (769 aa).

2 residues coordinate Mg(2+): Asp-490 and Asp-496. The region spanning 557-616 (PKIDTIMIPVDKIKVVIGKGGEQIDKIIAETGVKIDIDDEGLCSIFSSDQSAIDRAKEII) is the KH domain. The S1 motif domain occupies 626–694 (GEVYEAKVVR…DKGRVDASMR (69 aa)). The segment covering 700 to 734 (PEGYVEPERKPRERRDNKDRRNGNGFDRRNNDRNN) has biased composition (basic and acidic residues). The disordered stretch occupies residues 700 to 769 (PEGYVEPERK…FPELSTKKPE (70 aa)). A compositionally biased stretch (low complexity) spans 736–746 (NNHNNNSGNHS). Residues 747–769 (FELRERKSHVDHEFPELSTKKPE) are compositionally biased toward basic and acidic residues.

The protein belongs to the polyribonucleotide nucleotidyltransferase family. Requires Mg(2+) as cofactor.

The protein resides in the cytoplasm. The catalysed reaction is RNA(n+1) + phosphate = RNA(n) + a ribonucleoside 5'-diphosphate. Involved in mRNA degradation. Catalyzes the phosphorolysis of single-stranded polyribonucleotides processively in the 3'- to 5'-direction. This chain is Polyribonucleotide nucleotidyltransferase, found in Lactococcus lactis subsp. cremoris (strain SK11).